We begin with the raw amino-acid sequence, 310 residues long: O-acetylserine sulfhydrylase (310 aa).

At Lys-44 the chain carries N6-(pyridoxal phosphate)lysine. Residues Asn-74, 178 to 182, and Ser-266 each bind pyridoxal 5'-phosphate; that span reads GTGGT.

The protein belongs to the cysteine synthase/cystathionine beta-synthase family. Homodimer. It depends on pyridoxal 5'-phosphate as a cofactor.

It catalyses the reaction O-acetyl-L-serine + hydrogen sulfide = L-cysteine + acetate. It participates in amino-acid biosynthesis; L-cysteine biosynthesis; L-cysteine from L-serine: step 2/2. In terms of biological role, catalyzes the conversion of O-acetylserine (OAS) to cysteine through the elimination of acetate and addition of hydrogen sulfide. The chain is O-acetylserine sulfhydrylase (cysK) from Mycobacterium bovis (strain ATCC BAA-935 / AF2122/97).